A 115-amino-acid polypeptide reads, in one-letter code: Variant surface glycoprotein ANTAT 1.8 (115 aa).

N-linked (GlcNAc...) asparagine glycosylation is present at N42. A lipid anchor (GPI-anchor amidated aspartate) is attached at D92. A propeptide spans 93–115 (SSILVNKQLALSVVSAAFAALLF) (removed in mature form).

It localises to the cell membrane. VSG forms a coat on the surface of the parasite. The trypanosome evades the immune response of the host by expressing a series of antigenically distinct VSGs from an estimated 1000 VSG genes. The polypeptide is Variant surface glycoprotein ANTAT 1.8 (Trypanosoma brucei brucei).